The following is a 324-amino-acid chain: Acetaldehyde dehydrogenase 1 (324 aa).

Residue 18 to 21 (SGNI) coordinates NAD(+). Cysteine 136 serves as the catalytic Acyl-thioester intermediate. NAD(+)-binding positions include 167–175 (SAGPGTRAN) and asparagine 297.

It belongs to the acetaldehyde dehydrogenase family.

The catalysed reaction is acetaldehyde + NAD(+) + CoA = acetyl-CoA + NADH + H(+). The chain is Acetaldehyde dehydrogenase 1 from Parafrankia sp. (strain EAN1pec).